A 305-amino-acid chain; its full sequence is Putative S-adenosyl-L-methionine-dependent methyltransferase MAB_4607c (305 aa).

S-adenosyl-L-methionine is bound by residues Asp128 and 155–156; that span reads DL.

It belongs to the UPF0677 family.

Exhibits S-adenosyl-L-methionine-dependent methyltransferase activity. The polypeptide is Putative S-adenosyl-L-methionine-dependent methyltransferase MAB_4607c (Mycobacteroides abscessus (strain ATCC 19977 / DSM 44196 / CCUG 20993 / CIP 104536 / JCM 13569 / NCTC 13031 / TMC 1543 / L948) (Mycobacterium abscessus)).